The primary structure comprises 525 residues: 2,3-bisphosphoglycerate-independent phosphoglycerate mutase (525 aa).

Mn(2+) is bound by residues aspartate 15 and serine 65. The active-site Phosphoserine intermediate is the serine 65. Substrate contacts are provided by residues histidine 126, arginine 156 to aspartate 157, arginine 188, arginine 194, arginine 258 to arginine 261, and lysine 331. Residues aspartate 398, histidine 402, aspartate 439, histidine 440, and histidine 457 each coordinate Mn(2+).

Belongs to the BPG-independent phosphoglycerate mutase family. Monomer. It depends on Mn(2+) as a cofactor.

The catalysed reaction is (2R)-2-phosphoglycerate = (2R)-3-phosphoglycerate. The protein operates within carbohydrate degradation; glycolysis; pyruvate from D-glyceraldehyde 3-phosphate: step 3/5. In terms of biological role, catalyzes the interconversion of 2-phosphoglycerate and 3-phosphoglycerate. The protein is 2,3-bisphosphoglycerate-independent phosphoglycerate mutase of Picosynechococcus sp. (strain ATCC 27264 / PCC 7002 / PR-6) (Agmenellum quadruplicatum).